The following is a 288-amino-acid chain: Probable syndecan (288 aa).

The N-terminal stretch at 1 to 26 (MILKLNFCLSTYSVLILLSLSTQAFA) is a signal peptide. Over 27–231 (ANQAKTKVVP…ETLANGFYAA (205 aa)) the chain is Extracellular. A disordered region spans residues 67–175 (EVNGSGYPTD…NIHNDEDFFT (109 aa)). The N-linked (GlcNAc...) asparagine glycan is linked to Asn69. O-linked (Xyl...) (glycosaminoglycan) serine glycosylation is found at Ser71 and Ser86. Polar residues predominate over residues 89–104 (PPSSATTKSDKVTSPS). Positions 106 to 124 (AVVTAKPTTVPTTTASFKP) are enriched in low complexity. Over residues 141 to 164 (VEEDEDDDEDEDEDDEDDEEDFAD) the composition is skewed to acidic residues. Ser214 carries an O-linked (Xyl...) (glycosaminoglycan) serine glycan. A helical membrane pass occupies residues 232–252 (IAGGVLVAVITAILLVLFVVF). The Cytoplasmic portion of the chain corresponds to 253–288 (RIRKKDEGSYALDEPKQARPYASYGYTKASTKEFYA).

It belongs to the syndecan proteoglycan family.

It localises to the membrane. Its subcellular location is the cell surface. The protein localises to the cell junction. The protein resides in the cytoplasm. Functionally, cell surface proteoglycan that bears heparan sulfate. Required for correct mitotic spindle orientation of the ABar blastomere division plane and this may be through modulation of astral microtubule array, and in association with the wnt-signaling proteins mig-5 and dsh-2. Involved in the migration of AQR and PQR neurons, which descend from the Q neuroblasts. Promotes the axon guidance of D-type motor neurons. The chain is Probable syndecan from Caenorhabditis elegans.